The primary structure comprises 160 residues: 2-C-methyl-D-erythritol 2,4-cyclodiphosphate synthase (160 aa).

Positions 10 and 12 each coordinate a divalent metal cation. 4-CDP-2-C-methyl-D-erythritol 2-phosphate is bound by residues Asp10–His12 and His36–Ser37. His44 provides a ligand contact to a divalent metal cation. Residues Asp58 to Gly60, Phe63 to Asp67, and Arg144 contribute to the 4-CDP-2-C-methyl-D-erythritol 2-phosphate site.

This sequence belongs to the IspF family. Homotrimer. It depends on a divalent metal cation as a cofactor.

It carries out the reaction 4-CDP-2-C-methyl-D-erythritol 2-phosphate = 2-C-methyl-D-erythritol 2,4-cyclic diphosphate + CMP. The protein operates within isoprenoid biosynthesis; isopentenyl diphosphate biosynthesis via DXP pathway; isopentenyl diphosphate from 1-deoxy-D-xylulose 5-phosphate: step 4/6. In terms of biological role, involved in the biosynthesis of isopentenyl diphosphate (IPP) and dimethylallyl diphosphate (DMAPP), two major building blocks of isoprenoid compounds. Catalyzes the conversion of 4-diphosphocytidyl-2-C-methyl-D-erythritol 2-phosphate (CDP-ME2P) to 2-C-methyl-D-erythritol 2,4-cyclodiphosphate (ME-CPP) with a corresponding release of cytidine 5-monophosphate (CMP). The sequence is that of 2-C-methyl-D-erythritol 2,4-cyclodiphosphate synthase from Dechloromonas aromatica (strain RCB).